The sequence spans 1297 residues: DNA-directed RNA polymerase subunit beta' (1297 aa).

Zn(2+) is bound by residues Cys-60, Cys-62, Cys-75, and Cys-78. Mg(2+)-binding residues include Asp-535, Asp-537, and Asp-539. 4 residues coordinate Zn(2+): Cys-883, Cys-961, Cys-968, and Cys-971.

It belongs to the RNA polymerase beta' chain family. As to quaternary structure, the RNAP catalytic core consists of 2 alpha, 1 beta, 1 beta' and 1 omega subunit. When a sigma factor is associated with the core the holoenzyme is formed, which can initiate transcription. It depends on Mg(2+) as a cofactor. Zn(2+) is required as a cofactor.

The catalysed reaction is RNA(n) + a ribonucleoside 5'-triphosphate = RNA(n+1) + diphosphate. Its function is as follows. DNA-dependent RNA polymerase catalyzes the transcription of DNA into RNA using the four ribonucleoside triphosphates as substrates. This chain is DNA-directed RNA polymerase subunit beta', found in Salinispora tropica (strain ATCC BAA-916 / DSM 44818 / JCM 13857 / NBRC 105044 / CNB-440).